We begin with the raw amino-acid sequence, 192 residues long: Phosphoheptose isomerase (192 aa).

The SIS domain occupies 37–192 (LADSFKGGGK…IQLIEKEMVK (156 aa)). Position 52 to 54 (52 to 54 (NGG)) interacts with substrate. Zn(2+)-binding residues include His-61 and Glu-65. Residues Glu-65, 93 to 94 (ND), 119 to 121 (STS), Ser-124, and Gln-172 contribute to the substrate site. The Zn(2+) site is built by Gln-172 and His-180.

It belongs to the SIS family. GmhA subfamily. In terms of assembly, homotetramer. Zn(2+) is required as a cofactor.

The protein localises to the cytoplasm. The enzyme catalyses 2 D-sedoheptulose 7-phosphate = D-glycero-alpha-D-manno-heptose 7-phosphate + D-glycero-beta-D-manno-heptose 7-phosphate. It functions in the pathway carbohydrate biosynthesis; D-glycero-D-manno-heptose 7-phosphate biosynthesis; D-glycero-alpha-D-manno-heptose 7-phosphate and D-glycero-beta-D-manno-heptose 7-phosphate from sedoheptulose 7-phosphate: step 1/1. Functionally, catalyzes the isomerization of sedoheptulose 7-phosphate in D-glycero-D-manno-heptose 7-phosphate. The protein is Phosphoheptose isomerase of Escherichia coli O7:K1 (strain IAI39 / ExPEC).